The chain runs to 432 residues: UPF0597 protein APJL_1638 (432 aa).

The protein belongs to the UPF0597 family.

In Actinobacillus pleuropneumoniae serotype 3 (strain JL03), this protein is UPF0597 protein APJL_1638.